Consider the following 321-residue polypeptide: Cathepsin O (321 aa).

The N-terminal stretch at M1–A23 is a signal peptide. Positions D24–S107 are cleaved as a propeptide — activation peptide. Residues N62 and N105 are each glycosylated (N-linked (GlcNAc...) asparagine). Cystine bridges form between C129–C170, C163–C204, and C262–C310. C132 is an active-site residue. Active-site residues include H269 and N289.

It belongs to the peptidase C1 family. Expressed in all tissues examined. High levels seen in the ovary, kidney and placenta while low levels seen in thymus and skeletal muscle.

It localises to the lysosome. The enzyme catalyses The recombinant human enzyme hydrolyzes synthetic endopeptidase substrates including Z-Phe-Arg-NHMec and Z-Arg-Arg-NHMec.. Proteolytic enzyme possibly involved in normal cellular protein degradation and turnover. The protein is Cathepsin O (CTSO) of Homo sapiens (Human).